Consider the following 106-residue polypeptide: Small ribosomal subunit protein uS10 (106 aa).

Belongs to the universal ribosomal protein uS10 family. In terms of assembly, part of the 30S ribosomal subunit.

In terms of biological role, involved in the binding of tRNA to the ribosomes. In Synechococcus sp. (strain CC9902), this protein is Small ribosomal subunit protein uS10.